A 208-amino-acid chain; its full sequence is Type 3 secretion system stator protein (208 aa).

Belongs to the SctL stator family. The core secretion machinery of the T3SS is composed of approximately 20 different proteins, including cytoplasmic components, a base, an export apparatus and a needle. This subunit is part of the cytosolic complex.

The protein resides in the cytoplasm. Its function is as follows. Component of the type III secretion system (T3SS), also called injectisome, which is used to inject bacterial effector proteins into eukaryotic host cells. Acts as a regulator of the HrcN/SctN ATPase activity. This is Type 3 secretion system stator protein from Sinorhizobium fredii (strain NBRC 101917 / NGR234).